Here is a 570-residue protein sequence, read N- to C-terminus: Urease subunit alpha (570 aa).

The region spanning 131–570 (GGFDAHIHFI…LPMAQRYFLF (440 aa)) is the Urease domain. Ni(2+)-binding residues include histidine 136, histidine 138, and lysine 219. The residue at position 219 (lysine 219) is an N6-carboxylysine. Histidine 221 contacts substrate. Positions 248 and 274 each coordinate Ni(2+). Histidine 322 functions as the Proton donor in the catalytic mechanism. Aspartate 362 contacts Ni(2+).

This sequence belongs to the metallo-dependent hydrolases superfamily. Urease alpha subunit family. In terms of assembly, heterotrimer of UreA (gamma), UreB (beta) and UreC (alpha) subunits. Three heterotrimers associate to form the active enzyme. The cofactor is Ni cation. Post-translationally, carboxylation allows a single lysine to coordinate two nickel ions.

It is found in the cytoplasm. The enzyme catalyses urea + 2 H2O + H(+) = hydrogencarbonate + 2 NH4(+). Its pathway is nitrogen metabolism; urea degradation; CO(2) and NH(3) from urea (urease route): step 1/1. The polypeptide is Urease subunit alpha (Mesorhizobium japonicum (strain LMG 29417 / CECT 9101 / MAFF 303099) (Mesorhizobium loti (strain MAFF 303099))).